Consider the following 287-residue polypeptide: Fructose-1,6-bisphosphatase class 1 (287 aa).

Residues glutamate 67, aspartate 86, leucine 88, and aspartate 89 each contribute to the Mg(2+) site. Substrate-binding positions include 89–92, tyrosine 195, and lysine 226; that span reads DGSS. Mg(2+) is bound at residue glutamate 232.

This sequence belongs to the FBPase class 1 family. As to quaternary structure, homotetramer. It depends on Mg(2+) as a cofactor.

It localises to the cytoplasm. It carries out the reaction beta-D-fructose 1,6-bisphosphate + H2O = beta-D-fructose 6-phosphate + phosphate. The protein operates within carbohydrate biosynthesis; gluconeogenesis. The sequence is that of Fructose-1,6-bisphosphatase class 1 from Campylobacter concisus (strain 13826).